We begin with the raw amino-acid sequence, 197 residues long: Imidazoleglycerol-phosphate dehydratase (197 aa).

It belongs to the imidazoleglycerol-phosphate dehydratase family.

It localises to the cytoplasm. The enzyme catalyses D-erythro-1-(imidazol-4-yl)glycerol 3-phosphate = 3-(imidazol-4-yl)-2-oxopropyl phosphate + H2O. The protein operates within amino-acid biosynthesis; L-histidine biosynthesis; L-histidine from 5-phospho-alpha-D-ribose 1-diphosphate: step 6/9. This is Imidazoleglycerol-phosphate dehydratase from Pseudomonas syringae pv. syringae (strain B728a).